The following is a 459-amino-acid chain: Ribosomal protein uS12 methylthiotransferase RimO (459 aa).

Residues 1-28 (MSTNPPDLRPDLAPKARLTQPDRPGQPT) are disordered. In terms of domain architecture, MTTase N-terminal spans 27 to 137 (PTIGMVSLGC…VLDAVHAAVP (111 aa)). The [4Fe-4S] cluster site is built by Cys36, Cys72, Cys101, Cys168, Cys172, and Cys175. In terms of domain architecture, Radical SAM core spans 154–387 (LTPRHFSYLK…MAKSQDISEA (234 aa)). Residues 390-457 (AAKVAQRLEV…EYDLWGRLAP (68 aa)) enclose the TRAM domain.

This sequence belongs to the methylthiotransferase family. RimO subfamily. [4Fe-4S] cluster is required as a cofactor.

The protein resides in the cytoplasm. The enzyme catalyses L-aspartate(89)-[ribosomal protein uS12]-hydrogen + (sulfur carrier)-SH + AH2 + 2 S-adenosyl-L-methionine = 3-methylsulfanyl-L-aspartate(89)-[ribosomal protein uS12]-hydrogen + (sulfur carrier)-H + 5'-deoxyadenosine + L-methionine + A + S-adenosyl-L-homocysteine + 2 H(+). In terms of biological role, catalyzes the methylthiolation of an aspartic acid residue of ribosomal protein uS12. The sequence is that of Ribosomal protein uS12 methylthiotransferase RimO from Roseobacter denitrificans (strain ATCC 33942 / OCh 114) (Erythrobacter sp. (strain OCh 114)).